Reading from the N-terminus, the 973-residue chain is Translation initiation factor IF-2 (973 aa).

Residues 52 to 388 (PDQEEVKPAA…QAQKPAQPLE (337 aa)) form a disordered region. Basic and acidic residues-rich tracts occupy residues 83-120 (ESRKKDAAMLDSQKPDRDRVQKNGRERAGKATRADHYK), 128-148 (VPSRPPDRRFQERPKQSDKAR), 157-172 (QGARLKTADFVQERTR), 186-202 (VQQERVQDRQQKERPPF), 210-246 (PQHEHKPQDSVKERPHPERASREADNAKRAERLDKGA), 272-288 (RAGERGARPGGLHETKP), 314-333 (LLDDRRRQTEEKVKVTEKQK), and 343-360 (KSREKRNAMAELAEERLR). Residues 374-386 (AKPQEQAQKPAQP) are compositionally biased toward low complexity. The 170-residue stretch at 472-641 (DRPCVVTVMG…LLVAEMSELK (170 aa)) folds into the tr-type G domain. The interval 481 to 488 (GHVDHGKT) is G1. A GTP-binding site is contributed by 481-488 (GHVDHGKT). The tract at residues 506 to 510 (GITQH) is G2. The interval 527 to 530 (DTPG) is G3. GTP is bound by residues 527–531 (DTPGH) and 581–584 (NKID). The segment at 581 to 584 (NKID) is G4. Positions 617–619 (SAL) are G5.

The protein belongs to the TRAFAC class translation factor GTPase superfamily. Classic translation factor GTPase family. IF-2 subfamily.

Its subcellular location is the cytoplasm. Functionally, one of the essential components for the initiation of protein synthesis. Protects formylmethionyl-tRNA from spontaneous hydrolysis and promotes its binding to the 30S ribosomal subunits. Also involved in the hydrolysis of GTP during the formation of the 70S ribosomal complex. This Pelotomaculum thermopropionicum (strain DSM 13744 / JCM 10971 / SI) protein is Translation initiation factor IF-2.